The primary structure comprises 339 residues: D-erythrose-4-phosphate dehydrogenase (339 aa).

11–12 (RI) lines the NAD(+) pocket. Substrate contacts are provided by residues 153–155 (SCT), Arg199, 212–213 (TK), and Arg235. The active-site Nucleophile is Cys154. Asn317 contacts NAD(+).

The protein belongs to the glyceraldehyde-3-phosphate dehydrogenase family. Epd subfamily. Homotetramer.

The protein localises to the cytoplasm. It catalyses the reaction D-erythrose 4-phosphate + NAD(+) + H2O = 4-phospho-D-erythronate + NADH + 2 H(+). It functions in the pathway cofactor biosynthesis; pyridoxine 5'-phosphate biosynthesis; pyridoxine 5'-phosphate from D-erythrose 4-phosphate: step 1/5. Its function is as follows. Catalyzes the NAD-dependent conversion of D-erythrose 4-phosphate to 4-phosphoerythronate. This chain is D-erythrose-4-phosphate dehydrogenase, found in Shewanella halifaxensis (strain HAW-EB4).